Consider the following 157-residue polypeptide: RxLR effector protein PITG_04049 (157 aa).

The signal sequence occupies residues 1-23; sequence MRLIAGVLAGFLVICEVTSTSES. Residues 51–65 carry the RxLR-dEER motif; sequence QFLRTDVVMNRGEER.

It belongs to the RxLR effector family.

It localises to the secreted. It is found in the host cytoplasm. The protein localises to the host nucleus. Functionally, effector that might be involved in host plant infection. The sequence is that of RxLR effector protein PITG_04049 from Phytophthora infestans (strain T30-4) (Potato late blight agent).